The following is a 314-amino-acid chain: Taste receptor type 2 member 42 (314 aa).

Topologically, residues 1-7 (MATELDK) are extracellular. The chain crosses the membrane as a helical span at residues 8-28 (IFLILEIAEFIIGMLGNVFIG). The Cytoplasmic segment spans residues 29–50 (LVNCSEGIKNQKVFSADFILTC). The chain crosses the membrane as a helical span at residues 51–71 (LAISTIGQLFVILFDSFLVGL). The Extracellular segment spans residues 72-101 (ASHLYTTYRLGKPVIMLWHMTNHLTTWLAT). A helical transmembrane segment spans residues 102–122 (CLSIFYFFKIAHFPHSLFLWL). Residues 123 to 127 (RWRMN) are Cytoplasmic-facing. The chain crosses the membrane as a helical span at residues 128–148 (GMIVMLLILSLFLLIFNSLVL). The Extracellular portion of the chain corresponds to 149–187 (EIFIDISLNIIDKSNLTLYLDESKTVYDKLSILKTLLSL). Asparagine 163 carries N-linked (GlcNAc...) asparagine glycosylation. A helical transmembrane segment spans residues 188–208 (TSFIPFSLSLTSLLFLFLSLV). The Cytoplasmic portion of the chain corresponds to 209–238 (RHTRNLKLSSLGSRDSSTEAHRRAMKMVMS). A helical transmembrane segment spans residues 239–259 (FLFLFIVHFFSLQVANWIFFM). Topologically, residues 260 to 265 (LWNNKY) are extracellular. Residues 266–286 (IKFAMLALNAFPSCHSFILIL) form a helical membrane-spanning segment. The Cytoplasmic segment spans residues 287–314 (GNSKLRQTAVRLLWHLRNYTKTPNPLPL).

It belongs to the G-protein coupled receptor T2R family.

It is found in the membrane. In terms of biological role, receptor that may play a role in the perception of bitterness and is gustducin-linked. May play a role in sensing the chemical composition of the gastrointestinal content. The activity of this receptor may stimulate alpha gustducin, mediate PLC-beta-2 activation and lead to the gating of TRPM5. This Pan troglodytes (Chimpanzee) protein is Taste receptor type 2 member 42 (TAS2R42).